The sequence spans 325 residues: Elongation factor P--(R)-beta-lysine ligase (325 aa).

76–78 (SPE) contacts substrate. ATP is bound by residues 100-102 (RNE) and Asn-109. Residue Tyr-118 participates in substrate binding. Residue 244 to 245 (EL) participates in ATP binding. Glu-251 is a substrate binding site. Position 300 (Gly-300) interacts with ATP.

It belongs to the class-II aminoacyl-tRNA synthetase family. EpmA subfamily. Homodimer.

The catalysed reaction is D-beta-lysine + L-lysyl-[protein] + ATP = N(6)-((3R)-3,6-diaminohexanoyl)-L-lysyl-[protein] + AMP + diphosphate + H(+). In terms of biological role, with EpmB is involved in the beta-lysylation step of the post-translational modification of translation elongation factor P (EF-P). Catalyzes the ATP-dependent activation of (R)-beta-lysine produced by EpmB, forming a lysyl-adenylate, from which the beta-lysyl moiety is then transferred to the epsilon-amino group of a conserved specific lysine residue in EF-P. The polypeptide is Elongation factor P--(R)-beta-lysine ligase (Enterobacter sp. (strain 638)).